The primary structure comprises 493 residues: Cobyric acid synthase (493 aa).

The GATase cobBQ-type domain occupies 246 to 440 (PIDIAVIKMP…IHGVFDGVVF (195 aa)). The active-site Nucleophile is Cys326. The active site involves His432.

Belongs to the CobB/CobQ family. CobQ subfamily.

The protein operates within cofactor biosynthesis; adenosylcobalamin biosynthesis. Catalyzes amidations at positions B, D, E, and G on adenosylcobyrinic A,C-diamide. NH(2) groups are provided by glutamine, and one molecule of ATP is hydrogenolyzed for each amidation. This is Cobyric acid synthase from Clostridium botulinum (strain ATCC 19397 / Type A).